Here is a 109-residue protein sequence, read N- to C-terminus: Nucleoid-associated protein SG0690 (109 aa).

The disordered stretch occupies residues M1–R23.

The protein belongs to the YbaB/EbfC family. In terms of assembly, homodimer.

Its subcellular location is the cytoplasm. It is found in the nucleoid. Functionally, binds to DNA and alters its conformation. May be involved in regulation of gene expression, nucleoid organization and DNA protection. The sequence is that of Nucleoid-associated protein SG0690 from Sodalis glossinidius (strain morsitans).